The sequence spans 349 residues: MEVFIDLKTCEDRSYSIYIDPIQSIRLSSKTAIVTNPKVAGLHLKYLLNKIEAPELYIITLPDGEDYKNQETLDFLLDRLFDHKLDRKSVLIAFGGGVIGDMTGFAASVFQRGIDFIQIPTTLLSQVDASVGGKTGINNRFGKNLIGAFHQPKAVYIDTHFLQTLPQREFSAGVAEIVKMAVVFDKDFFEWLMKNDLKEEDNLKYAIKRSVELKAAIVAKDEREGGVRASLNYGHTFAHVIENETGYKRFLHGEAVAIGMVMANELAVKTGLLSREDAEKIKNLLQRYNLPVCYEVEDPEDFYEHFFLDKKTQNDTIKFVLPKDIGDFVITDTIKKDQIIDVLREFERC.

NAD(+) is bound by residues 63-68 (DGEDYK), 97-101 (GVIGD), 121-122 (TT), Lys-134, Lys-143, and 161-164 (FLQT). Zn(2+)-binding residues include Glu-176, His-235, and His-252.

Belongs to the sugar phosphate cyclases superfamily. Dehydroquinate synthase family. Requires Co(2+) as cofactor. Zn(2+) serves as cofactor. It depends on NAD(+) as a cofactor.

The protein resides in the cytoplasm. It carries out the reaction 7-phospho-2-dehydro-3-deoxy-D-arabino-heptonate = 3-dehydroquinate + phosphate. Its pathway is metabolic intermediate biosynthesis; chorismate biosynthesis; chorismate from D-erythrose 4-phosphate and phosphoenolpyruvate: step 2/7. In terms of biological role, catalyzes the conversion of 3-deoxy-D-arabino-heptulosonate 7-phosphate (DAHP) to dehydroquinate (DHQ). This chain is 3-dehydroquinate synthase, found in Nitratiruptor sp. (strain SB155-2).